The following is a 142-amino-acid chain: DNA polymerase III subunit chi (142 aa).

It belongs to the DNA polymerase III chi/HolC chain family. As to quaternary structure, DNA polymerase III contains a core (composed of alpha, epsilon and theta chains) that associates with a tau subunit. This core dimerizes to form the POLIII' complex. PolIII' associates with the gamma complex (composed of gamma, delta, delta', psi and chi chains) and with the beta chain to form the complete DNA polymerase III complex. Interacts directly with the psi subunit (holD). The only subunit of the DNA polymerase III holoenzyme known to interact with single-stranded DNA binding protein (SSB).

The catalysed reaction is DNA(n) + a 2'-deoxyribonucleoside 5'-triphosphate = DNA(n+1) + diphosphate. Its function is as follows. Part of the beta sliding clamp loading complex, which hydrolyzes ATP to load the beta clamp onto primed DNA to form the DNA replication pre-initiation complex. DNA polymerase III is a complex, multichain enzyme responsible for most of the replicative synthesis in bacteria. This DNA polymerase also exhibits 3' to 5' exonuclease activity. This is DNA polymerase III subunit chi from Pseudomonas aeruginosa (strain ATCC 15692 / DSM 22644 / CIP 104116 / JCM 14847 / LMG 12228 / 1C / PRS 101 / PAO1).